Reading from the N-terminus, the 648-residue chain is Protein associated with UVRAG as autophagy enhancer (648 aa).

Polar residues-rich tracts occupy residues 131–146 (QESLLKNPKTVATSPS) and 157–173 (PHLTASTDDGDARSSSR). Residues 131–173 (QESLLKNPKTVATSPSPKEGSARSESPHLTASTDDGDARSSSR) are disordered. At S144 the chain carries Phosphoserine. The segment at 183-222 (ETFMLPADVEKENLHFYAADIIISVIENMKCNLPNQQQPE) is interaction with UVRAG. Residues K469, K509, K519, K559, and K619 each carry the N6-acetyllysine modification.

Interacts with UVRAG; the interaction is direct and promotes association with the PI3K/PI3KC3 and HOPS complexes. Interacts with STX17. In terms of processing, phosphorylated by MTOR at Ser-144 under nutrient-rich conditions. Phosphorylation prevents acetylation by KAT5/TIP60 and impairs RUBCNL/PACER function and autophagosome maturation. Under autophagy induction, Phosphorylation by MTOR is repressed, enabling acetylation by KAT5/TIP60. Post-translationally, acetylated by KAT5/TIP60 under autophagy induction, promoting autophagosome maturation and lipid metabolism. Acetylation is prevented by phosphorylation by MTOR. Lys-469 and Lys-559 constitute the key sites for tuning function in autophagy.

Its subcellular location is the cytoplasmic vesicle. It is found in the autophagosome membrane. In terms of biological role, regulator of autophagy that promotes autophagosome maturation by facilitating the biogenesis of phosphatidylinositol 3-phosphate (PtdIns(3)P) in late steps of autophagy. Acts by antagonizing RUBCN, thereby stimulating phosphatidylinositol 3-kinase activity of the PI3K/PI3KC3 complex. Following anchorage to the autophagosomal SNARE STX17, promotes the recruitment of PI3K/PI3KC3 and HOPS complexes to the autophagosome to regulate the fusion specificity of autophagosomes with late endosomes/lysosomes. Binds phosphoinositides phosphatidylinositol 3-phosphate (PtdIns(3)P), 4-phosphate (PtdIns(4)P) and 5-phosphate (PtdIns(5)P). In addition to its role in autophagy, acts as a regulator of lipid and glycogen homeostasis. May act as a tumor suppressor. The chain is Protein associated with UVRAG as autophagy enhancer from Mus musculus (Mouse).